A 255-amino-acid chain; its full sequence is Coniferyl-alcohol dehydrogenase (255 aa).

NAD(+) contacts are provided by residues 12–17 (GVSSGI), Asp36, 51–52 (DL), and Gly77. Residue Ser117 participates in substrate binding. The NAD(+) site is built by Tyr157 and Lys161. Tyr157 acts as the Proton acceptor in catalysis.

It belongs to the short-chain dehydrogenases/reductases (SDR) family.

It catalyses the reaction (E)-coniferol + NADP(+) = (E)-coniferaldehyde + NADPH + H(+). Its function is as follows. Catalyzes the conversion of coniferyl alcohol into coniferyl aldehyde in the eugenol degradation pathway. Specific for coniferyl alcohol; does not act on cinnamyl alcohol, 4-coumaryl alcohol or sinapyl alcohol. The sequence is that of Coniferyl-alcohol dehydrogenase (calA) from Pseudomonas sp. (strain HR199 / DSM 7063).